Consider the following 395-residue polypeptide: Putative phosphatidate cytidylyltransferase (395 aa).

A run of 9 helical transmembrane segments spans residues 13 to 33, 78 to 98, 115 to 135, 144 to 164, 177 to 197, 201 to 221, 242 to 262, 306 to 326, and 358 to 378; these read STVFVVLLIVFCFFLMFSAFA, FAFGLVIVLFISVIAVLMNWE, SLLSGIMVSGGMIPTFFVIYF, WIWTASFAGMIVFLWAVYMIS, IYSLGAVICFIACIGTIYFSV, WTTIFLLIAIGVCTDTFAYLF, AFFGVTGTVLTISIICVLYSI, FYIYWWVSTLALIFTASIFAI, and FDSSSFLISFFFIYHVIAGIS.

The protein belongs to the CDS family.

It is found in the cell membrane. The catalysed reaction is a 1,2-diacyl-sn-glycero-3-phosphate + CTP + H(+) = a CDP-1,2-diacyl-sn-glycerol + diphosphate. The protein operates within phospholipid metabolism; CDP-diacylglycerol biosynthesis; CDP-diacylglycerol from sn-glycerol 3-phosphate: step 3/3. In Mycoplasma pneumoniae (strain ATCC 29342 / M129 / Subtype 1) (Mycoplasmoides pneumoniae), this protein is Putative phosphatidate cytidylyltransferase (cdsA).